The sequence spans 668 residues: tRNA 5-methylaminomethyl-2-thiouridine biosynthesis bifunctional protein MnmC (668 aa).

The tract at residues methionine 1 to glutamate 245 is tRNA (mnm(5)s(2)U34)-methyltransferase. Positions isoleucine 270–glycine 668 are FAD-dependent cmnm(5)s(2)U34 oxidoreductase.

The protein in the N-terminal section; belongs to the methyltransferase superfamily. tRNA (mnm(5)s(2)U34)-methyltransferase family. This sequence in the C-terminal section; belongs to the DAO family. The cofactor is FAD.

Its subcellular location is the cytoplasm. The catalysed reaction is 5-aminomethyl-2-thiouridine(34) in tRNA + S-adenosyl-L-methionine = 5-methylaminomethyl-2-thiouridine(34) in tRNA + S-adenosyl-L-homocysteine + H(+). Functionally, catalyzes the last two steps in the biosynthesis of 5-methylaminomethyl-2-thiouridine (mnm(5)s(2)U) at the wobble position (U34) in tRNA. Catalyzes the FAD-dependent demodification of cmnm(5)s(2)U34 to nm(5)s(2)U34, followed by the transfer of a methyl group from S-adenosyl-L-methionine to nm(5)s(2)U34, to form mnm(5)s(2)U34. The polypeptide is tRNA 5-methylaminomethyl-2-thiouridine biosynthesis bifunctional protein MnmC (Shigella dysenteriae serotype 1 (strain Sd197)).